A 364-amino-acid chain; its full sequence is SVP1-like protein 2 (364 aa).

WD repeat units lie at residues 173 to 213 (AHDS…KICE) and 218 to 257 (YQHT…NTIR).

This sequence belongs to the WD repeat PROPPIN family.

The protein localises to the vacuole membrane. It localises to the cytoplasmic vesicle membrane. The protein resides in the preautophagosomal structure membrane. Functionally, involved in mitochondrial or peroxisomal functions and amino acid signaling pathways. This Schizosaccharomyces pombe (strain 972 / ATCC 24843) (Fission yeast) protein is SVP1-like protein 2 (hsv2).